The sequence spans 202 residues: Imidazoleglycerol-phosphate dehydratase (202 aa).

This sequence belongs to the imidazoleglycerol-phosphate dehydratase family.

The protein resides in the cytoplasm. It carries out the reaction D-erythro-1-(imidazol-4-yl)glycerol 3-phosphate = 3-(imidazol-4-yl)-2-oxopropyl phosphate + H2O. Its pathway is amino-acid biosynthesis; L-histidine biosynthesis; L-histidine from 5-phospho-alpha-D-ribose 1-diphosphate: step 6/9. The chain is Imidazoleglycerol-phosphate dehydratase from Corynebacterium efficiens (strain DSM 44549 / YS-314 / AJ 12310 / JCM 11189 / NBRC 100395).